Reading from the N-terminus, the 428-residue chain is Hydrolase acrC (428 aa).

S248 is a catalytic residue.

This sequence belongs to the AB hydrolase superfamily. FUS2 hydrolase family.

Its pathway is secondary metabolite biosynthesis. Hydrolase; part of the cluster that mediates the biosynthesis of acurin A, a highly reduced polyketide coupled to a serine via a peptide bond. The activities of the highly reducing polyketide synthase acrA and the nonribosomal peptide synthetase acrB are collectively responsible for the synthesis of the acurin A core structure with a heptaketide backbone produced by acrA covalently fused to a L-serine by acrB. After the formation of the PK-NRP hybrid product, it is detached from acrB by reductive release to set up the formation of the lactam ring by aldol condensation. The hydrolyase acrC then catalyzes water loss to generate a double bond in the ring. This double bond is probably reduced, which is followed by three oxidations at C-22 to generate the carboxylic acid moiety, involving probably the FAD-binding monooxygenase acrE and the cytochrome P450 monooxygenases acrD and acrF. Finally, a last methylation step performed by the O-methyltransferase acrG leads to the production of acurin A. This Aspergillus aculeatus (strain ATCC 16872 / CBS 172.66 / WB 5094) protein is Hydrolase acrC.